Here is a 154-residue protein sequence, read N- to C-terminus: MAEAAQAPQQQFAIQRIYLKDVSFEAPSSPVMFQKEWNPDVKLDLDTQSRELGQGVYEVVLRLTVTVKNAEETAFLCEVQQAGIFSAEQMEAGQLAHCLGAFCPNILFPYARETISSLVVKGTFPQLNLAPVNFDALFMNYLQQQAQEGATANA.

Belongs to the SecB family. In terms of assembly, homotetramer, a dimer of dimers. One homotetramer interacts with 1 SecA dimer.

The protein resides in the cytoplasm. Its function is as follows. One of the proteins required for the normal export of preproteins out of the cell cytoplasm. It is a molecular chaperone that binds to a subset of precursor proteins, maintaining them in a translocation-competent state. It also specifically binds to its receptor SecA. This Vibrio cholerae serotype O1 (strain ATCC 39541 / Classical Ogawa 395 / O395) protein is Protein-export protein SecB.